A 34-amino-acid chain; its full sequence is Photosystem II reaction center protein M (34 aa).

Residues 5–25 (ILAFIATALFILVPTSFLLII) form a helical membrane-spanning segment.

It belongs to the PsbM family. As to quaternary structure, PSII is composed of 1 copy each of membrane proteins PsbA, PsbB, PsbC, PsbD, PsbE, PsbF, PsbH, PsbI, PsbJ, PsbK, PsbL, PsbM, PsbT, PsbX, PsbY, PsbZ, Psb30/Ycf12, at least 3 peripheral proteins of the oxygen-evolving complex and a large number of cofactors. It forms dimeric complexes.

It is found in the plastid. Its subcellular location is the chloroplast thylakoid membrane. One of the components of the core complex of photosystem II (PSII). PSII is a light-driven water:plastoquinone oxidoreductase that uses light energy to abstract electrons from H(2)O, generating O(2) and a proton gradient subsequently used for ATP formation. It consists of a core antenna complex that captures photons, and an electron transfer chain that converts photonic excitation into a charge separation. This subunit is found at the monomer-monomer interface. The chain is Photosystem II reaction center protein M from Triticum aestivum (Wheat).